Consider the following 269-residue polypeptide: Formamidopyrimidine-DNA glycosylase (269 aa).

Residue P2 is the Schiff-base intermediate with DNA of the active site. E3 serves as the catalytic Proton donor. The active-site Proton donor; for beta-elimination activity is K57. H90, R109, and R150 together coordinate DNA. An FPG-type zinc finger spans residues 235–269 (QVYGKAGEQCPNCAELIQELKIGQRNTFYCSSCQV). The active-site Proton donor; for delta-elimination activity is the R259.

The protein belongs to the FPG family. Monomer. Requires Zn(2+) as cofactor.

The enzyme catalyses Hydrolysis of DNA containing ring-opened 7-methylguanine residues, releasing 2,6-diamino-4-hydroxy-5-(N-methyl)formamidopyrimidine.. It catalyses the reaction 2'-deoxyribonucleotide-(2'-deoxyribose 5'-phosphate)-2'-deoxyribonucleotide-DNA = a 3'-end 2'-deoxyribonucleotide-(2,3-dehydro-2,3-deoxyribose 5'-phosphate)-DNA + a 5'-end 5'-phospho-2'-deoxyribonucleoside-DNA + H(+). Involved in base excision repair of DNA damaged by oxidation or by mutagenic agents. Acts as a DNA glycosylase that recognizes and removes damaged bases. Has a preference for oxidized purines, such as 7,8-dihydro-8-oxoguanine (8-oxoG). Has AP (apurinic/apyrimidinic) lyase activity and introduces nicks in the DNA strand. Cleaves the DNA backbone by beta-delta elimination to generate a single-strand break at the site of the removed base with both 3'- and 5'-phosphates. The chain is Formamidopyrimidine-DNA glycosylase from Vibrio atlanticus (strain LGP32) (Vibrio splendidus (strain Mel32)).